Reading from the N-terminus, the 125-residue chain is Ribonuclease P protein component (125 aa).

This sequence belongs to the RnpA family. As to quaternary structure, consists of a catalytic RNA component (M1 or rnpB) and a protein subunit.

The catalysed reaction is Endonucleolytic cleavage of RNA, removing 5'-extranucleotides from tRNA precursor.. In terms of biological role, RNaseP catalyzes the removal of the 5'-leader sequence from pre-tRNA to produce the mature 5'-terminus. It can also cleave other RNA substrates such as 4.5S RNA. The protein component plays an auxiliary but essential role in vivo by binding to the 5'-leader sequence and broadening the substrate specificity of the ribozyme. The chain is Ribonuclease P protein component from Rhodococcus jostii (strain RHA1).